Consider the following 103-residue polypeptide: NADH-quinone oxidoreductase subunit K (103 aa).

3 consecutive transmembrane segments (helical) span residues 4 to 24, 28 to 48, and 64 to 84; these read LTSY…GVIA, IFVI…FLIT, and MVIS…ILLF.

This sequence belongs to the complex I subunit 4L family. NDH-1 is composed of 14 different subunits. Subunits NuoA, H, J, K, L, M, N constitute the membrane sector of the complex.

It is found in the cell inner membrane. The catalysed reaction is a quinone + NADH + 5 H(+)(in) = a quinol + NAD(+) + 4 H(+)(out). NDH-1 shuttles electrons from NADH, via FMN and iron-sulfur (Fe-S) centers, to quinones in the respiratory chain. The immediate electron acceptor for the enzyme in this species is believed to be ubiquinone. Couples the redox reaction to proton translocation (for every two electrons transferred, four hydrogen ions are translocated across the cytoplasmic membrane), and thus conserves the redox energy in a proton gradient. The sequence is that of NADH-quinone oxidoreductase subunit K from Aliarcobacter butzleri (strain RM4018) (Arcobacter butzleri).